We begin with the raw amino-acid sequence, 329 residues long: Calponin-3 (329 aa).

Lys-23 carries the post-translational modification N6-acetyllysine. Positions 26-130 (HQAEEDLRNW…TLVALAGLAK (105 aa)) constitute a Calponin-homology (CH) domain. Lys-158 is modified (N6-methyllysine). Calponin-like repeat units follow at residues 164 to 189 (IGLQMGTNKCASQAGMTAYGTRRHLY), 204 to 229 (ISLQMGTNKGASQAGMLAPGTRRDIY), and 243 to 268 (ISLQMGTNKVASQKGMSVYGLGRQVY). Positions 279 to 329 (PVIHNGSQGTGTNGSEISDSDYQAEYPDEYHGEYQDDYPRDYQYSDQGIDY) are disordered. The segment covering 306-318 (DEYHGEYQDDYPR) has biased composition (basic and acidic residues). Ser-323 carries the phosphoserine modification.

It belongs to the calponin family. As to expression, expressed in both non-smooth muscle tissues as well as smooth muscle tissues.

Its function is as follows. Thin filament-associated protein that is implicated in the regulation and modulation of smooth muscle contraction. It is capable of binding to actin, calmodulin and tropomyosin. The interaction of calponin with actin inhibits the actomyosin Mg-ATPase activity. In Homo sapiens (Human), this protein is Calponin-3 (CNN3).